A 1433-amino-acid chain; its full sequence is DNA-directed RNA polymerase subunit beta' (1433 aa).

Positions 60, 62, 75, and 78 each coordinate Zn(2+). Mg(2+) is bound by residues Asp-449, Asp-451, and Asp-453. Positions 777, 851, 858, and 861 each coordinate Zn(2+). Acidic residues-rich tracts occupy residues 1383–1393 and 1411–1433; these read DSEEEEEELSE and EEDE…DDDD. The interval 1383 to 1433 is disordered; the sequence is DSEEEEEELSELSEAAPVSTATLSKLVAEEDEDEDELEEEADDSDDEDDDD.

This sequence belongs to the RNA polymerase beta' chain family. In terms of assembly, the RNAP catalytic core consists of 2 alpha, 1 beta, 1 beta' and 1 omega subunit. When a sigma factor is associated with the core the holoenzyme is formed, which can initiate transcription. Mg(2+) serves as cofactor. The cofactor is Zn(2+).

The enzyme catalyses RNA(n) + a ribonucleoside 5'-triphosphate = RNA(n+1) + diphosphate. DNA-dependent RNA polymerase catalyzes the transcription of DNA into RNA using the four ribonucleoside triphosphates as substrates. This Leptospira biflexa serovar Patoc (strain Patoc 1 / Ames) protein is DNA-directed RNA polymerase subunit beta'.